We begin with the raw amino-acid sequence, 285 residues long: Acetyl-coenzyme A carboxylase carboxyl transferase subunit beta (285 aa).

Residues 29-285 (IMTKCPKCKK…ILKIHQEVTK (257 aa)) form the CoA carboxyltransferase N-terminal domain. The Zn(2+) site is built by Cys33, Cys36, Cys52, and Cys55. The C4-type zinc-finger motif lies at 33–55 (CPKCKKIMYTKELAENLNVCFNC).

Belongs to the AccD/PCCB family. As to quaternary structure, acetyl-CoA carboxylase is a heterohexamer composed of biotin carboxyl carrier protein (AccB), biotin carboxylase (AccC) and two subunits each of ACCase subunit alpha (AccA) and ACCase subunit beta (AccD). Zn(2+) serves as cofactor.

The protein resides in the cytoplasm. The enzyme catalyses N(6)-carboxybiotinyl-L-lysyl-[protein] + acetyl-CoA = N(6)-biotinyl-L-lysyl-[protein] + malonyl-CoA. The protein operates within lipid metabolism; malonyl-CoA biosynthesis; malonyl-CoA from acetyl-CoA: step 1/1. In terms of biological role, component of the acetyl coenzyme A carboxylase (ACC) complex. Biotin carboxylase (BC) catalyzes the carboxylation of biotin on its carrier protein (BCCP) and then the CO(2) group is transferred by the transcarboxylase to acetyl-CoA to form malonyl-CoA. This is Acetyl-coenzyme A carboxylase carboxyl transferase subunit beta from Staphylococcus aureus (strain Newman).